A 449-amino-acid polypeptide reads, in one-letter code: Glutamyl-tRNA reductase (449 aa).

Substrate contacts are provided by residues 58–61 (TCNR), Ser121, 126–128 (ETQ), and Gln132. The Nucleophile role is filled by Cys59. Position 203 to 208 (203 to 208 (GLGEMA)) interacts with NADP(+).

This sequence belongs to the glutamyl-tRNA reductase family. As to quaternary structure, homodimer.

It catalyses the reaction (S)-4-amino-5-oxopentanoate + tRNA(Glu) + NADP(+) = L-glutamyl-tRNA(Glu) + NADPH + H(+). It functions in the pathway porphyrin-containing compound metabolism; protoporphyrin-IX biosynthesis; 5-aminolevulinate from L-glutamyl-tRNA(Glu): step 1/2. Catalyzes the NADPH-dependent reduction of glutamyl-tRNA(Glu) to glutamate 1-semialdehyde (GSA). This is Glutamyl-tRNA reductase from Helicobacter pylori (strain G27).